Consider the following 177-residue polypeptide: Large ribosomal subunit protein uL5 (177 aa).

It belongs to the universal ribosomal protein uL5 family. As to quaternary structure, part of the 50S ribosomal subunit; part of the 5S rRNA/L5/L18/L25 subcomplex. Contacts the 5S rRNA and the P site tRNA. Forms a bridge to the 30S subunit in the 70S ribosome.

Functionally, this is one of the proteins that bind and probably mediate the attachment of the 5S RNA into the large ribosomal subunit, where it forms part of the central protuberance. In the 70S ribosome it contacts protein S13 of the 30S subunit (bridge B1b), connecting the 2 subunits; this bridge is implicated in subunit movement. Contacts the P site tRNA; the 5S rRNA and some of its associated proteins might help stabilize positioning of ribosome-bound tRNAs. The polypeptide is Large ribosomal subunit protein uL5 (Neorickettsia sennetsu (strain ATCC VR-367 / Miyayama) (Ehrlichia sennetsu)).